We begin with the raw amino-acid sequence, 299 residues long: HTH-type transcriptional regulator ArgP (299 aa).

The 57-residue stretch at 4-60 (PDYRTLQALDAVIRERGFERAAQKLCITQSAVSQRIKQLENMFGQPLLVRTVPPRPT) folds into the HTH lysR-type domain. Residues 21–40 (FERAAQKLCITQSAVSQRIK) constitute a DNA-binding region (H-T-H motif).

This sequence belongs to the LysR transcriptional regulatory family. As to quaternary structure, homodimer.

In terms of biological role, controls the transcription of genes involved in arginine and lysine metabolism. In Erwinia tasmaniensis (strain DSM 17950 / CFBP 7177 / CIP 109463 / NCPPB 4357 / Et1/99), this protein is HTH-type transcriptional regulator ArgP.